The primary structure comprises 475 residues: Phenolic acid decarboxylase (475 aa).

Residues N161, H183, and E225 each contribute to the Mn(2+) site. Residues 161 to 166 (NVGIYR) and 182 to 183 (MH) contribute to the prenylated FMN site. E274 (proton donor) is an active-site residue.

This sequence belongs to the UbiD family. YclC subfamily. Prenylated FMN is required as a cofactor. It depends on Mn(2+) as a cofactor.

The catalysed reaction is 4-hydroxybenzoate + H(+) = phenol + CO2. It carries out the reaction vanillate + H(+) = guaiacol + CO2. Its function is as follows. Involved in the non-oxidative decarboxylation and detoxification of phenolic derivatives under both aerobic and anaerobic conditions. Phenolic acid decarboxylase that catalyzes the reversible decarboxylation of 4-hydroxybenzoate and vanillate. This is Phenolic acid decarboxylase from Escherichia coli O157:H7.